The sequence spans 261 residues: THO complex subunit THP2 (261 aa).

In terms of assembly, component of the THO complex, which is composed of HPR1, MFT1, THO2 and THP2. Together with SUB2, TEX1 and YRA1, THO forms the transcription/export (TREX) complex. THO associates with DNA and RNA in vitro.

It is found in the nucleus. In terms of biological role, component the THO subcomplex of the TREX complex, which operates in coupling transcription elongation to mRNA export. The THO complex is recruited to transcribed genes and moves along the gene with the elongating polymerase during transcription. THO is important for stabilizing nascent RNA in the RNA polymerase II elongation complex by preventing formation of DNA:RNA hybrids behind the elongating polymerase. It functions in cotranscriptional formation of an export-competent messenger ribonucleoprotein particle (mRNP) by facilitating the loading of ATP-dependent RNA helicase SUB2 and the mRNA export factor YRA1 along the nascent mRNA. The sequence is that of THO complex subunit THP2 (THP2) from Saccharomyces cerevisiae (strain ATCC 204508 / S288c) (Baker's yeast).